The following is a 344-amino-acid chain: Ferrochelatase (344 aa).

Fe cation contacts are provided by His214 and Glu295.

Belongs to the ferrochelatase family.

The protein resides in the cytoplasm. The enzyme catalyses heme b + 2 H(+) = protoporphyrin IX + Fe(2+). It participates in porphyrin-containing compound metabolism; protoheme biosynthesis; protoheme from protoporphyrin-IX: step 1/1. Its function is as follows. Catalyzes the ferrous insertion into protoporphyrin IX. This chain is Ferrochelatase, found in Rhizobium johnstonii (strain DSM 114642 / LMG 32736 / 3841) (Rhizobium leguminosarum bv. viciae).